The sequence spans 96 residues: Conglutin delta 4 (96 aa).

An N-terminal signal peptide occupies residues 1–22; the sequence is MARLTILIAFVAALVLVVHTSA. Disulfide bonds link C29–C78 and C80–C91.

This sequence belongs to the 2S seed storage albumins family.

It is found in the endoplasmic reticulum. This chain is Conglutin delta 4, found in Lupinus angustifolius (Narrow-leaved blue lupine).